We begin with the raw amino-acid sequence, 657 residues long: Macrolide export ATP-binding/permease protein MacB (657 aa).

Residues 5 to 242 (LELLDVHRTY…RAVTGESAFD (238 aa)) enclose the ABC transporter domain. An ATP-binding site is contributed by 41-48 (GASGSGKS). Transmembrane regions (helical) follow at residues 276-296 (FLSVLGIFVGVASVIAMMALG), 538-558 (IAAISLLVGGIGIMNIMLVSV), 596-616 (IGVFAGVGISLILAFFAGWAV), and 620-640 (LLSVVLATTFSALIGVFFGLW).

It belongs to the ABC transporter superfamily. Macrolide exporter (TC 3.A.1.122) family. Homodimer.

The protein resides in the cell inner membrane. Its function is as follows. Non-canonical ABC transporter that contains transmembrane domains (TMD), which form a pore in the inner membrane, and an ATP-binding domain (NBD), which is responsible for energy generation. Confers resistance against macrolides. The sequence is that of Macrolide export ATP-binding/permease protein MacB from Chlorobium phaeobacteroides (strain DSM 266 / SMG 266 / 2430).